Consider the following 559-residue polypeptide: Heterochromatin protein 1-binding protein 3 (559 aa).

Residues 1-132 (MATDLSEAEP…SKEKEKKVKK (132 aa)) are disordered. 2 stretches are compositionally biased toward basic and acidic residues: residues 51-68 (TPPKSKPAEGGEEVKADA) and 96-128 (EQPKEPENEEKGETKSSVETKKDDKDQSKEKEK). H15 domains lie at 158-233 (SRPK…VVVS), 256-331 (QQVK…QLKK), and 339-414 (GGTL…QLCF). The short motif at 256 to 260 (QQVKL) is the PxVxL motif element. Residues 421–559 (DVLYPEKQQD…AMRKSLRAKK (139 aa)) form a disordered region. The segment covering 429 to 459 (QDEDSEESQEEEEEESEEEEESEEEESEEEE) has biased composition (acidic residues). The segment covering 463–515 (KKRMQKRPPPKSRSRAPPMKRRESKPKPRKTPAAHQGKAKPPPKVKTPVKKAK) has biased composition (basic residues). The span at 516–533 (PAAPAIKKPSGGSSSKKP) shows a compositional bias: low complexity. The span at 549–559 (SAMRKSLRAKK) shows a compositional bias: basic residues.

It localises to the nucleus. Its subcellular location is the chromosome. In terms of biological role, component of heterochromatin that maintains heterochromatin integrity during G1/S progression and regulates the duration of G1 phase to critically influence cell proliferative capacity. This chain is Heterochromatin protein 1-binding protein 3 (HP1BP3), found in Gallus gallus (Chicken).